The primary structure comprises 204 residues: Imidazoleglycerol-phosphate dehydratase (204 aa).

This sequence belongs to the imidazoleglycerol-phosphate dehydratase family.

Its subcellular location is the cytoplasm. The enzyme catalyses D-erythro-1-(imidazol-4-yl)glycerol 3-phosphate = 3-(imidazol-4-yl)-2-oxopropyl phosphate + H2O. It functions in the pathway amino-acid biosynthesis; L-histidine biosynthesis; L-histidine from 5-phospho-alpha-D-ribose 1-diphosphate: step 6/9. The protein is Imidazoleglycerol-phosphate dehydratase of Corynebacterium urealyticum (strain ATCC 43042 / DSM 7109).